The sequence spans 282 residues: MNEFYIGILYIVPTPIGNLSDITYRALEVLKDVDIIAAENIRHTNILLQHFNIKNNLILMNKDNEKKQSHNLIQELKKGKKIALVSNAGTPIINDPGCILIKQCHIFDIKVIPLPGACAAITALSASGIINNRFCYEGFLPSRKKSRCDLLHSLKEETRTIIFYESKHRILESIKDIIEQIDKNRHIVIAREMTKKWESIYGAKASLILEWLKENKYRYKGEMVIIIDGFKKLKNYTLSKKILDTFSILRKFFSLKTSVLITAQIHDINKNKLYQYVIKKEE.

The protein belongs to the methyltransferase superfamily. RsmI family.

It is found in the cytoplasm. The enzyme catalyses cytidine(1402) in 16S rRNA + S-adenosyl-L-methionine = 2'-O-methylcytidine(1402) in 16S rRNA + S-adenosyl-L-homocysteine + H(+). Functionally, catalyzes the 2'-O-methylation of the ribose of cytidine 1402 (C1402) in 16S rRNA. The chain is Ribosomal RNA small subunit methyltransferase I from Buchnera aphidicola subsp. Acyrthosiphon pisum (strain APS) (Acyrthosiphon pisum symbiotic bacterium).